A 196-amino-acid chain; its full sequence is Small ribosomal subunit protein uS4c (196 aa).

Residues 17–36 form a disordered region; sequence ALPGLTRKTPKSGSNLKKKF. One can recognise an S4 RNA-binding domain in the interval 89–150; that stretch reads MRLDNILFRL…NQRSKRLIQN (62 aa).

It belongs to the universal ribosomal protein uS4 family. Part of the 30S ribosomal subunit. Contacts protein S5. The interaction surface between S4 and S5 is involved in control of translational fidelity.

The protein resides in the plastid. Its subcellular location is the chloroplast. In terms of biological role, one of the primary rRNA binding proteins, it binds directly to 16S rRNA where it nucleates assembly of the body of the 30S subunit. Its function is as follows. With S5 and S12 plays an important role in translational accuracy. This chain is Small ribosomal subunit protein uS4c (rps4), found in Phyllostachys flexuosa (Drooping timber bamboo).